The sequence spans 66 residues: ATP synthase protein 8 (66 aa).

The chain crosses the membrane as a helical span at residues 8-24 (PWPMVIMSMILTLFYIT). The residue at position 54 (lysine 54) is an N6-acetyllysine; alternate. N6-succinyllysine; alternate is present on lysine 54. Lysine 57 carries the N6-acetyllysine modification.

This sequence belongs to the ATPase protein 8 family. As to quaternary structure, F-type ATPases have 2 components, CF(1) - the catalytic core - and CF(0) - the membrane proton channel. Component of an ATP synthase complex composed of ATP5PB, ATP5MC1, ATP5F1E, ATP5PD, ATP5ME, ATP5PF, ATP5MF, MT-ATP6, MT-ATP8, ATP5F1A, ATP5F1B, ATP5F1D, ATP5F1C, ATP5PO, ATP5MG, ATP5MK and ATP5MJ. Interacts with PRICKLE3.

It is found in the mitochondrion membrane. Functionally, mitochondrial membrane ATP synthase (F(1)F(0) ATP synthase or Complex V) produces ATP from ADP in the presence of a proton gradient across the membrane which is generated by electron transport complexes of the respiratory chain. F-type ATPases consist of two structural domains, F(1) - containing the extramembraneous catalytic core and F(0) - containing the membrane proton channel, linked together by a central stalk and a peripheral stalk. During catalysis, ATP synthesis in the catalytic domain of F(1) is coupled via a rotary mechanism of the central stalk subunits to proton translocation. Part of the complex F(0) domain. Minor subunit located with subunit a in the membrane. The protein is ATP synthase protein 8 (MT-ATP8) of Alouatta guariba (Brown howler monkey).